The primary structure comprises 228 residues: uncharacterized protein (228 aa).

A tRNA-binding domain is found at L99–I207.

This is an uncharacterized protein from Mycoplasma genitalium (strain ATCC 33530 / DSM 19775 / NCTC 10195 / G37) (Mycoplasmoides genitalium).